The sequence spans 55 residues: Conotoxin Cal22d (55 aa).

A propeptide spanning residues 1-5 (GRPSA) is cleaved from the precursor.

Contains 4 disulfide bonds. In terms of tissue distribution, expressed by the venom duct.

It is found in the secreted. Its function is as follows. Probable neurotoxin with unknown target. Possibly targets ion channels. The protein is Conotoxin Cal22d of Californiconus californicus (California cone).